Consider the following 354-residue polypeptide: Divinyl chlorophyll a/b light-harvesting protein PcbF (354 aa).

Transmembrane regions (helical) follow at residues 27–47 (FIAS…SNTL), 88–108 (VVTL…GGLL), 140–160 (FILG…VEWA), 201–221 (VMGG…FHAI), 248–268 (AILS…AFWC), and 315–335 (TANF…WHAL).

The protein belongs to the PsbB/PsbC family. IsiA/Pcb subfamily. The antenna complex consists of divinyl chlorophylls (a and b) and divinyl chlorophyll a/b binding proteins and binds more divinyl chlorophyll b than does the antenna complex from high-light-adapted Prochlorococcus. Requires divinyl chlorophyll a as cofactor. The cofactor is divinyl chlorophyll b.

Its subcellular location is the cellular thylakoid membrane. The antenna complex functions as a light receptor, it captures and delivers excitation energy to photosystems II and I. The Prochlorales pcb genes are not related to higher plant LHCs. The protein is Divinyl chlorophyll a/b light-harvesting protein PcbF (pcbF) of Prochlorococcus marinus (strain SARG / CCMP1375 / SS120).